The sequence spans 102 residues: Small ribosomal subunit protein uS10 (102 aa).

Belongs to the universal ribosomal protein uS10 family. As to quaternary structure, part of the 30S ribosomal subunit.

Its function is as follows. Involved in the binding of tRNA to the ribosomes. This chain is Small ribosomal subunit protein uS10, found in Thermoanaerobacter pseudethanolicus (strain ATCC 33223 / 39E) (Clostridium thermohydrosulfuricum).